Consider the following 691-residue polypeptide: Elongation factor G (691 aa).

The tr-type G domain maps to 8–283; it reads EDYRNIGIMA…AVVDFLPSPL (276 aa). GTP is bound by residues 17-24, 81-85, and 135-138; these read AHIDAGKT, DTPGH, and NKMD.

It belongs to the TRAFAC class translation factor GTPase superfamily. Classic translation factor GTPase family. EF-G/EF-2 subfamily.

The protein resides in the cytoplasm. Its function is as follows. Catalyzes the GTP-dependent ribosomal translocation step during translation elongation. During this step, the ribosome changes from the pre-translocational (PRE) to the post-translocational (POST) state as the newly formed A-site-bound peptidyl-tRNA and P-site-bound deacylated tRNA move to the P and E sites, respectively. Catalyzes the coordinated movement of the two tRNA molecules, the mRNA and conformational changes in the ribosome. The polypeptide is Elongation factor G (Parvibaculum lavamentivorans (strain DS-1 / DSM 13023 / NCIMB 13966)).